The following is a 155-amino-acid chain: Histone H3-like centromeric protein hH3v (155 aa).

Low complexity predominate over residues 1–24; it reads MPPKKGGVTKSKAVSKKAAAVPTP. Residues 1–56 form a disordered region; the sequence is MPPKKGGVTKSKAVSKKAAAVPTPKATPPGRRKSRASSVQPGDPVPQGKKRRYRPG. The tract at residues 45–148 is H3-like; it reads VPQGKKRRYR…IQLARRIRGV (104 aa).

Belongs to the histone H3 family. As to quaternary structure, component of centromeric nucleosomes, where DNA is wrapped around a histone octamer core. The octamer contains two molecules each of H2A, H2B, hH3v/CENPA and H4 assembled in one hH3v-H4 heterotetramer and two H2A-H2B heterodimers. Interacts with the inner kinetochore. Post-translationally, ubiquitinated. Is degraded through ubiquitin-mediated proteolysis when not protected by its association to the kinetochore.

Its subcellular location is the nucleus. It is found in the chromosome. The protein localises to the centromere. In terms of biological role, histone H3-like nucleosomal protein that is specifically found in centromeric nucleosomes. Replaces conventional H3 in the nucleosome core of centromeric chromatin that serves as an assembly site for the inner kinetochore. Required for recruitment and assembly of kinetochore proteins, mitotic progression and chromosome segregation. May serve as an epigenetic mark that propagates centromere identity through replication and cell division. This is Histone H3-like centromeric protein hH3v (hH3v) from Neurospora crassa (strain ATCC 24698 / 74-OR23-1A / CBS 708.71 / DSM 1257 / FGSC 987).